Consider the following 560-residue polypeptide: Poly(3-hydroxyalkanoate) polymerase 2 (560 aa).

C296 is a catalytic residue.

This sequence belongs to the PHA/PHB synthase family. Type II PhaC subfamily.

Its pathway is biopolymer metabolism; poly-(R)-3-hydroxybutanoate biosynthesis. Synthesizes poly(3-hydroxyalkanoates) (PHA), complements a mutant of P.putida that does not make PHA. This chain is Poly(3-hydroxyalkanoate) polymerase 2, found in Ectopseudomonas oleovorans (Pseudomonas oleovorans).